A 1117-amino-acid polypeptide reads, in one-letter code: Centrosomal protein of 126 kDa (1117 aa).

Positions 1 to 42 (MLAGRPGTRSAVGELGTESSDNLDRAPLGPRESGGHHRPGSY) are disordered. Residues 49-121 (LEKNLEEERQ…EEVTEKFQRA (73 aa)) are a coiled coil. Disordered stretches follow at residues 643–664 (AENS…QQFH) and 730–759 (KKEE…IIRK). Residues 730 to 744 (KKEESKIPVHDDSKT) are compositionally biased toward basic and acidic residues. The segment covering 745-758 (KQGKPQRGRAKIIR) has biased composition (basic residues).

As to quaternary structure, interacts with DCTN1. In terms of tissue distribution, expressed in brain, lung, skeletal muscle, kidney, pancreas, testis and ovary.

It is found in the midbody. The protein localises to the cytoplasm. It localises to the cytoskeleton. Its subcellular location is the microtubule organizing center. The protein resides in the centrosome. It is found in the cilium basal body. Participates in cytokinesis. Necessary for microtubules and mitotic spindle organization. Involved in primary cilium formation. This Homo sapiens (Human) protein is Centrosomal protein of 126 kDa.